Consider the following 79-residue polypeptide: Conotoxin 12 (79 aa).

Positions 1–22 are cleaved as a signal peptide; sequence MKLTCVLIITVLFLTASQLITA. The propeptide occupies 23–47; it reads DYSRDQRQYRAVRLGDEMRNFKGAR. 3 cysteine pairs are disulfide-bonded: cysteine 49–cysteine 62, cysteine 56–cysteine 67, and cysteine 61–cysteine 77.

It belongs to the conotoxin O1 superfamily. As to expression, expressed by the venom duct.

The protein resides in the secreted. This chain is Conotoxin 12, found in Conus vexillum (Flag cone).